The chain runs to 250 residues: MGQKVHPIGIRLGVVKRHNANWYANPKQYAEYLLKDLQVREFLTKKLKNAMVSNILIERPSGAAKVTISTARPGIVIGKKGEDIEKLQRELTNIMGVPAQVSINEIDRPDLDARLVAEAIASQLEKRVMFRRAMKRAVQNTMRAGAKGIKVEVSGRLGGAEIARTEWYREGRVPLHTLRADIDYATMRAETTYGTIGVKVWIFRGEILGGMKQVMNPAPAEERPAKRGRGRGEGQERRGRRGDRAADKGE.

The KH type-2 domain maps to 39-107; sequence VREFLTKKLK…PAQVSINEID (69 aa). Residues 215–250 are disordered; sequence MNPAPAEERPAKRGRGRGEGQERRGRRGDRAADKGE. Residues 220-250 show a composition bias toward basic and acidic residues; the sequence is AEERPAKRGRGRGEGQERRGRRGDRAADKGE.

It belongs to the universal ribosomal protein uS3 family. Part of the 30S ribosomal subunit. Forms a tight complex with proteins S10 and S14.

Functionally, binds the lower part of the 30S subunit head. Binds mRNA in the 70S ribosome, positioning it for translation. This chain is Small ribosomal subunit protein uS3, found in Acinetobacter baumannii (strain AB307-0294).